The chain runs to 433 residues: Actin-related protein 4 (433 aa).

Positions 289–317 are disordered; the sequence is GSDEEMNEEPSKPIEQTENNEVSQQDSSV. Residues 302 to 317 show a composition bias toward polar residues; that stretch reads IEQTENNEVSQQDSSV.

This sequence belongs to the actin family. ARP4 subfamily. Component of the NuA4 histone acetyltransferase complex, of the INO80 chromatin remodeling complex, and of the SWR1 chromatin remodeling complex.

The protein localises to the nucleus. Chromatin interaction component of the NuA4 histone acetyltransferase complex which is involved in transcriptional activation of selected genes principally by acetylation of nucleosomal histone H4 and H2A. The NuA4 complex is also involved in DNA repair. Is required for NuA4 complex integrity. Component of the SWR1 complex which mediates the ATP-dependent exchange of histone H2A for the H2A variant HZT1 leading to transcriptional regulation of selected genes by chromatin remodeling. Component of the INO80 complex which remodels chromatin by shifting nucleosomes and is involved in DNA repair. This is Actin-related protein 4 (alp5) from Schizosaccharomyces pombe (strain 972 / ATCC 24843) (Fission yeast).